A 417-amino-acid chain; its full sequence is Serine hydroxymethyltransferase (417 aa).

(6S)-5,6,7,8-tetrahydrofolate-binding positions include L121 and 125 to 127 (GHL). Residue K229 is modified to N6-(pyridoxal phosphate)lysine. 355–357 (SPF) is a (6S)-5,6,7,8-tetrahydrofolate binding site.

The protein belongs to the SHMT family. Homodimer. The cofactor is pyridoxal 5'-phosphate.

The protein localises to the cytoplasm. It catalyses the reaction (6R)-5,10-methylene-5,6,7,8-tetrahydrofolate + glycine + H2O = (6S)-5,6,7,8-tetrahydrofolate + L-serine. Its pathway is one-carbon metabolism; tetrahydrofolate interconversion. It participates in amino-acid biosynthesis; glycine biosynthesis; glycine from L-serine: step 1/1. Its function is as follows. Catalyzes the reversible interconversion of serine and glycine with tetrahydrofolate (THF) serving as the one-carbon carrier. This reaction serves as the major source of one-carbon groups required for the biosynthesis of purines, thymidylate, methionine, and other important biomolecules. Also exhibits THF-independent aldolase activity toward beta-hydroxyamino acids, producing glycine and aldehydes, via a retro-aldol mechanism. This chain is Serine hydroxymethyltransferase, found in Buchnera aphidicola subsp. Acyrthosiphon pisum (strain 5A).